We begin with the raw amino-acid sequence, 440 residues long: 6-phospho-alpha-glucosidase (440 aa).

An NAD(+)-binding site is contributed by 4 to 70 (FSIVVAGGGS…PDINFVYTTD (67 aa)). 2 residues coordinate substrate: Arg-93 and Asn-147. Cys-169 contributes to the Mn(2+) binding site. The Proton donor role is filled by Asp-170. His-200 lines the Mn(2+) pocket. Tyr-263 (proton acceptor) is an active-site residue. A substrate-binding site is contributed by Arg-283.

Belongs to the glycosyl hydrolase 4 family. As to quaternary structure, homodimer. NAD(+) is required as a cofactor. It depends on Mn(2+) as a cofactor.

It participates in glycan degradation; palatinose degradation. Functionally, in vitro, readily hydrolyzes p-nitrophenyl-alpha-D-glucopyranoside 6-phosphate (pNPalphaG6P), a chromogenic analog of the phosphorylated isomers of sucrose. In vivo, is probably involved in the degradation of the 6-phosphate derivatives of the sucrose isomers trehalulose, turanose, maltulose and palatinose, catalyzing their hydrolysis into glucose 6-phosphate (G6P) and fructose, which allows the bacterium to use these sugars as energy sources for growth. Is not able to hydrolyze the C2 or C4 chromogenic stereomers (i.e. pNPalpha-mannopyranoside-6P and pNPalpha-galactopyranoside-6P, respectively). The polypeptide is 6-phospho-alpha-glucosidase (pagL) (Leptotrichia buccalis (strain ATCC 14201 / DSM 1135 / JCM 12969 / NCTC 10249 / C-1013-b)).